Reading from the N-terminus, the 380-residue chain is PqqA peptide cyclase (380 aa).

The 216-residue stretch at 8-223 (VNPPLWLLAE…VADYRQKMAA (216 aa)) folds into the Radical SAM core domain. [4Fe-4S] cluster contacts are provided by C22, C26, and C29.

The protein belongs to the radical SAM superfamily. PqqE family. Interacts with PqqD. The interaction is necessary for activity of PqqE. It depends on [4Fe-4S] cluster as a cofactor.

It catalyses the reaction [PQQ precursor protein] + S-adenosyl-L-methionine = E-Y cross-linked-[PQQ precursor protein] + 5'-deoxyadenosine + L-methionine + H(+). It participates in cofactor biosynthesis; pyrroloquinoline quinone biosynthesis. Catalyzes the cross-linking of a glutamate residue and a tyrosine residue in the PqqA protein as part of the biosynthesis of pyrroloquinoline quinone (PQQ). In Klebsiella pneumoniae (strain 342), this protein is PqqA peptide cyclase.